A 482-amino-acid chain; its full sequence is tRNA sulfurtransferase (482 aa).

The THUMP domain occupies 61–165 (LAIRDALTRI…DDRLLLIKGR (105 aa)). ATP-binding positions include 183 to 184 (LI), Lys265, Gly287, and Gln296. Residues Cys344 and Cys456 are joined by a disulfide bond. Positions 404–482 (FGPNDVILDI…GFNNVKVYRL (79 aa)) constitute a Rhodanese domain. Cys456 (cysteine persulfide intermediate) is an active-site residue.

The protein belongs to the ThiI family.

The protein resides in the cytoplasm. It carries out the reaction [ThiI sulfur-carrier protein]-S-sulfanyl-L-cysteine + a uridine in tRNA + 2 reduced [2Fe-2S]-[ferredoxin] + ATP + H(+) = [ThiI sulfur-carrier protein]-L-cysteine + a 4-thiouridine in tRNA + 2 oxidized [2Fe-2S]-[ferredoxin] + AMP + diphosphate. The catalysed reaction is [ThiS sulfur-carrier protein]-C-terminal Gly-Gly-AMP + S-sulfanyl-L-cysteinyl-[cysteine desulfurase] + AH2 = [ThiS sulfur-carrier protein]-C-terminal-Gly-aminoethanethioate + L-cysteinyl-[cysteine desulfurase] + A + AMP + 2 H(+). It functions in the pathway cofactor biosynthesis; thiamine diphosphate biosynthesis. Catalyzes the ATP-dependent transfer of a sulfur to tRNA to produce 4-thiouridine in position 8 of tRNAs, which functions as a near-UV photosensor. Also catalyzes the transfer of sulfur to the sulfur carrier protein ThiS, forming ThiS-thiocarboxylate. This is a step in the synthesis of thiazole, in the thiamine biosynthesis pathway. The sulfur is donated as persulfide by IscS. This Shigella boydii serotype 18 (strain CDC 3083-94 / BS512) protein is tRNA sulfurtransferase.